Consider the following 313-residue polypeptide: Probable cell division protein WhiA (313 aa).

Positions 274–308 (SLKELGELVPGGPISKSGVNHRLRKLNAYADELRA) form a DNA-binding region, H-T-H motif.

Belongs to the WhiA family.

Its function is as follows. Involved in cell division and chromosome segregation. The protein is Probable cell division protein WhiA of Limosilactobacillus reuteri subsp. reuteri (strain JCM 1112) (Lactobacillus reuteri).